We begin with the raw amino-acid sequence, 130 residues long: Protein ApaG (130 aa).

The 125-residue stretch at 3–127 folds into the ApaG domain; the sequence is RATTRKIQVT…FSLDVPHMAR (125 aa).

This is Protein ApaG from Azorhizobium caulinodans (strain ATCC 43989 / DSM 5975 / JCM 20966 / LMG 6465 / NBRC 14845 / NCIMB 13405 / ORS 571).